Consider the following 90-residue polypeptide: UPF0335 protein R02793 (90 aa).

It belongs to the UPF0335 family.

This chain is UPF0335 protein R02793, found in Rhizobium meliloti (strain 1021) (Ensifer meliloti).